The chain runs to 146 residues: Hemoglobin subunit beta (146 aa).

Residue Val1 is modified to N-acetylvaline. The Globin domain occupies 2–146; sequence HLTPEEKNAV…VANALAHKYH (145 aa). Thr12 carries the phosphothreonine modification. At Ser44 the chain carries Phosphoserine. Lys59 carries the N6-acetyllysine modification. A heme b-binding site is contributed by His63. Lys82 is modified (N6-acetyllysine). Position 92 (His92) interacts with heme b. Cys93 carries the post-translational modification S-nitrosocysteine. At Lys144 the chain carries N6-acetyllysine.

This sequence belongs to the globin family. Heterotetramer of two alpha chains and two beta chains. Red blood cells.

Involved in oxygen transport from the lung to the various peripheral tissues. The chain is Hemoglobin subunit beta (HBB) from Papio cynocephalus (Yellow baboon).